We begin with the raw amino-acid sequence, 217 residues long: Methylthioribulose-1-phosphate dehydratase (217 aa).

Zn(2+)-binding residues include His106 and His108.

Belongs to the aldolase class II family. MtnB subfamily. It depends on Zn(2+) as a cofactor.

It carries out the reaction 5-(methylsulfanyl)-D-ribulose 1-phosphate = 5-methylsulfanyl-2,3-dioxopentyl phosphate + H2O. It functions in the pathway amino-acid biosynthesis; L-methionine biosynthesis via salvage pathway; L-methionine from S-methyl-5-thio-alpha-D-ribose 1-phosphate: step 2/6. In terms of biological role, catalyzes the dehydration of methylthioribulose-1-phosphate (MTRu-1-P) into 2,3-diketo-5-methylthiopentyl-1-phosphate (DK-MTP-1-P). The polypeptide is Methylthioribulose-1-phosphate dehydratase (Xanthomonas campestris pv. campestris (strain 8004)).